An 81-amino-acid polypeptide reads, in one-letter code: Cytotoxin I-like P-15 (81 aa).

Residues 1 to 21 (MKTLLLTLAAATIVCLDLGYT) form the signal peptide. Cystine bridges form between Cys24-Cys42, Cys35-Cys59, Cys63-Cys74, and Cys75-Cys80.

This sequence belongs to the three-finger toxin family. Short-chain subfamily. Type IA cytotoxin sub-subfamily. As to quaternary structure, monomer in solution; Homodimer and oligomer in the presence of negatively charged lipids forming a pore with a size ranging between 20 and 30 Angstroms. As to expression, expressed by the venom gland.

Its subcellular location is the secreted. The protein resides in the target cell membrane. In terms of biological role, shows cytolytic activity on many different cells by forming pore in lipid membranes. In vivo, increases heart rate or kills the animal by cardiac arrest. In addition, it binds to heparin with high affinity, interacts with Kv channel-interacting protein 1 (KCNIP1) in a calcium-independent manner, and binds to integrin alpha-V/beta-3 (ITGAV/ITGB3) with moderate affinity. The sequence is that of Cytotoxin I-like P-15 from Naja atra (Chinese cobra).